A 1582-amino-acid chain; its full sequence is Dynein axonemal assembly factor 1 homolog (1582 aa).

LRR repeat units lie at residues 38 to 60 (RLNDVLYLHFQGYQCIENLDEYT), 61 to 82 (ELKSLWLESNAISEIQNLTKLT), 83 to 104 (KLKCLYLQNNLITKMENLEFNR), 105 to 126 (ELDTLNLSQNHIRKIENIGTDI), 129 to 150 (VLNTLNITSNYLTDSASLAALV), and 154 to 175 (TLSVLDLSNNRIDDILIVKIFE). The 39-residue stretch at 189 to 227 (PVVSRLPQYRKTLILACKELTYLDSRPVFPRDRACAEAW) folds into the LRRCT domain. Disordered stretches follow at residues 245 to 420 (AERR…SEMD), 560 to 587 (SSDVQEQAKDPSESDEEPTEEEMEVKSQ), 859 to 878 (FSKDTPESLDAQLAKDEDRR), 913 to 942 (DTGELEELPPPPELISDSESEKEVEEDDDA), 1073 to 1092 (SSNEDLEAKHKSNDDPLVER), 1101 to 1137 (MQRMKEHEERARELQEQLEKEKEEENSGPIKLSMGEG), 1150 to 1218 (TEII…QAEG), 1305 to 1345 (KDNE…TAKD), 1358 to 1438 (LDPE…PYQT), 1484 to 1517 (EDSKIGDGPTEKFLDQKAQDNTENTDERPENPKN), and 1529 to 1548 (PSESLEDTEATETPEVSTEQ). Residues 313 to 327 (ESQASEHSTTSSTSA) show a composition bias toward low complexity. Over residues 339-392 (HIAERISNRRVKPLEGRPKVLYDEAASGDEKAVTTTDSKKDSNAEDLPELKDIT) the composition is skewed to basic and acidic residues. Over residues 409–420 (TLLQSDSGSEMD) the composition is skewed to polar residues. Over residues 572–582 (ESDEEPTEEEM) the composition is skewed to acidic residues. A compositionally biased stretch (acidic residues) spans 928-942 (SDSESEKEVEEDDDA). 2 stretches are compositionally biased toward basic and acidic residues: residues 1078 to 1092 (LEAKHKSNDDPLVER) and 1103 to 1125 (RMKEHEERARELQEQLEKEKEEE). The segment covering 1166–1178 (EGGAQQEEGGAQS) has biased composition (low complexity). 3 stretches are compositionally biased toward basic and acidic residues: residues 1321-1335 (PKEEHIPEVKSETET), 1398-1427 (SALKETTEIGDSEKQENKTQDETLDPKDTE), and 1484-1514 (EDSKIGDGPTEKFLDQKAQDNTENTDERPEN). The span at 1529-1540 (PSESLEDTEATE) shows a compositional bias: acidic residues.

This sequence belongs to the DNAAF1 family.

It is found in the cell projection. It localises to the cilium. Its function is as follows. Cilium-specific protein required for cilia structures. In Drosophila pseudoobscura pseudoobscura (Fruit fly), this protein is Dynein axonemal assembly factor 1 homolog (dtr).